Reading from the N-terminus, the 591-residue chain is MMRSHYCGALNRSHVGQTVTLSGWVHRVRNLGRFIFMQIRDREGIVQVFFDEKDEAIFKIASSLRSEACVQIQGEVIARDESQINKEMATGEIEVLVKNVVVYNNADVLPLDFNQNNTEEQRLKYRYLDLRRPEMAEKLKTRAKITSFVRRYMDDNGFLDIETPMLTKATPEGARDYLVPSRVHNGKFYALPQSPQLFKQLLMMSGFDRYYQIVKCFRDEDLRADRQPEFTQIDVETSFLTAEEVRELMENMIHGLWLDRLNVDLGKFPIMTWQEAMQRFGSDKPDLRNPLELVDVADILKDVEFKVFNEPANSADGRVTVLRVPNGASLTRKQIDEYTQFVGIYGAKGLAWAKINDVNAGMEGIQSPVAKFLNEEVFKALIERTNATSGDILFFGADKWQVVTDSMGALRLKVGRDLALTDLSAWKPLWVIDFPMFEKDDEGNLSAMHHPFTSPKNLTPEELAANPVNAVANAYDMVINGYEVGGGSVRIYDPKMQQTVFGILGINEQDQQEKFGFLLDALKFGTPPHAGLAFGLDRLTMLITGTENIRDVIAFPKTTAAACLMTEAPSFANPQALEELGIAVLKKEKAE.

Glutamate 172 serves as a coordination point for L-aspartate. The interval 196 to 199 (QLFK) is aspartate. Position 218 (arginine 218) interacts with L-aspartate. ATP is bound by residues 218-220 (RDE) and glutamine 227. Position 449 (histidine 449) interacts with L-aspartate. An ATP-binding site is contributed by glutamate 483. Residue arginine 490 coordinates L-aspartate. ATP is bound at residue 535–538 (GLDR).

It belongs to the class-II aminoacyl-tRNA synthetase family. Type 1 subfamily. In terms of assembly, homodimer.

The protein resides in the cytoplasm. It catalyses the reaction tRNA(Asp) + L-aspartate + ATP = L-aspartyl-tRNA(Asp) + AMP + diphosphate. Its function is as follows. Catalyzes the attachment of L-aspartate to tRNA(Asp) in a two-step reaction: L-aspartate is first activated by ATP to form Asp-AMP and then transferred to the acceptor end of tRNA(Asp). This Actinobacillus pleuropneumoniae serotype 7 (strain AP76) protein is Aspartate--tRNA ligase.